The chain runs to 178 residues: Probable chorismate pyruvate-lyase (178 aa).

Substrate contacts are provided by methionine 37, arginine 78, leucine 114, and glutamate 165.

Belongs to the UbiC family.

Its subcellular location is the cytoplasm. It catalyses the reaction chorismate = 4-hydroxybenzoate + pyruvate. The protein operates within cofactor biosynthesis; ubiquinone biosynthesis. Functionally, removes the pyruvyl group from chorismate, with concomitant aromatization of the ring, to provide 4-hydroxybenzoate (4HB) for the ubiquinone pathway. The sequence is that of Probable chorismate pyruvate-lyase from Aeromonas hydrophila subsp. hydrophila (strain ATCC 7966 / DSM 30187 / BCRC 13018 / CCUG 14551 / JCM 1027 / KCTC 2358 / NCIMB 9240 / NCTC 8049).